Reading from the N-terminus, the 201-residue chain is Reticulon-like protein B10 (201 aa).

Positions 14 to 201 (VADLIMWKNR…KPTNKIKKMQ (188 aa)) constitute a Reticulon domain. A run of 3 helical transmembrane segments spans residues 25-45 (GGFL…KCGY), 46-66 (SFFP…FLWA), and 135-155 (FLNF…IPFL).

It is found in the endoplasmic reticulum membrane. The chain is Reticulon-like protein B10 (RTNLB10) from Arabidopsis thaliana (Mouse-ear cress).